A 410-amino-acid polypeptide reads, in one-letter code: LL-diaminopimelate aminotransferase (410 aa).

2 residues coordinate substrate: Tyr-15 and Gly-42. Pyridoxal 5'-phosphate-binding positions include Tyr-72, 108–109 (AK), Tyr-132, Asn-187, Tyr-218, and 246–248 (SFS). Lys-109, Tyr-132, and Asn-187 together coordinate substrate. The residue at position 249 (Lys-249) is an N6-(pyridoxal phosphate)lysine. Positions 257 and 292 each coordinate pyridoxal 5'-phosphate. Positions 292 and 388 each coordinate substrate.

This sequence belongs to the class-I pyridoxal-phosphate-dependent aminotransferase family. LL-diaminopimelate aminotransferase subfamily. Homodimer. Requires pyridoxal 5'-phosphate as cofactor.

It catalyses the reaction (2S,6S)-2,6-diaminopimelate + 2-oxoglutarate = (S)-2,3,4,5-tetrahydrodipicolinate + L-glutamate + H2O + H(+). Its pathway is amino-acid biosynthesis; L-lysine biosynthesis via DAP pathway; LL-2,6-diaminopimelate from (S)-tetrahydrodipicolinate (aminotransferase route): step 1/1. Involved in the synthesis of meso-diaminopimelate (m-DAP or DL-DAP), required for both lysine and peptidoglycan biosynthesis. Catalyzes the direct conversion of tetrahydrodipicolinate to LL-diaminopimelate. Is also able to catalyze the reverse reaction in vitro, i.e. the transamination of LL-diaminopimelate with 2-oxoglutarate to produce 2-oxo-6-aminopimelate (in equilibrium with tetrahydrodipicolinate) and glutamate. Has maximal aminotransferase activity using 2-oxoglutarate as an amino group acceptor, and cannot use oxaloacetate instead of 2-oxoglutarate, although 2-oxoadipate can substitute with 21% relative activity. Cannot use m-DAP, lysine or ornithine as the amino-group donor, when using 2-oxoglutarate as the amino-group acceptor. The sequence is that of LL-diaminopimelate aminotransferase from Methanothermobacter thermautotrophicus (strain ATCC 29096 / DSM 1053 / JCM 10044 / NBRC 100330 / Delta H) (Methanobacterium thermoautotrophicum).